The sequence spans 59 residues: Large ribosomal subunit protein uL30 (59 aa).

Belongs to the universal ribosomal protein uL30 family. Part of the 50S ribosomal subunit.

The sequence is that of Large ribosomal subunit protein uL30 from Bacillus subtilis (strain 168).